A 118-amino-acid chain; its full sequence is Small nuclear ribonucleoprotein Sm D2 (118 aa).

The segment at 1 to 31 (MSLLNKPKSEMTPEELQKREEEEFNTGPLSV) is disordered. An N-acetylserine modification is found at Ser2. Glycyl lysine isopeptide (Lys-Gly) (interchain with G-Cter in SUMO2) cross-links involve residues Lys6 and Lys8. Positions 7-21 (PKSEMTPEELQKREE) are enriched in basic and acidic residues. A Phosphoserine modification is found at Ser9. A Phosphothreonine modification is found at Thr12. The Sm domain occupies 29–115 (LSVLTQSVKN…VIVVLRNPLI (87 aa)).

Belongs to the snRNP core protein family. Core component of the spliceosomal U1, U2, U4 and U5 small nuclear ribonucleoproteins (snRNPs), the building blocks of the spliceosome. Most spliceosomal snRNPs contain a common set of Sm proteins, SNRPB, SNRPD1, SNRPD2, SNRPD3, SNRPE, SNRPF and SNRPG that assemble in a heptameric protein ring on the Sm site of the small nuclear RNA to form the core snRNP. Component of the U1 snRNP. The U1 snRNP is composed of the U1 snRNA and the 7 core Sm proteins SNRPB, SNRPD1, SNRPD2, SNRPD3, SNRPE, SNRPF and SNRPG, and at least three U1 snRNP-specific proteins SNRNP70/U1-70K, SNRPA/U1-A and SNRPC/U1-C. Component of the U4/U6-U5 tri-snRNP complex composed of the U4, U6 and U5 snRNAs and at least PRPF3, PRPF4, PRPF6, PRPF8, PRPF31, SNRNP200, TXNL4A, SNRNP40, SNRPB, SNRPD1, SNRPD2, SNRPD3, SNRPE, SNRPF, SNRPG, DDX23, CD2BP2, PPIH, SNU13, EFTUD2, SART1 and USP39, plus LSM2, LSM3, LSM4, LSM5, LSM6, LSM7 and LSM8. Component of the minor spliceosome, which splices U12-type introns. Part of the SMN-Sm complex that contains SMN1, GEMIN2/SIP1, DDX20/GEMIN3, GEMIN4, GEMIN5, GEMIN6, GEMIN7, GEMIN8, STRAP/UNRIP and the Sm proteins SNRPB, SNRPD1, SNRPD2, SNRPD3, SNRPE, SNRPF and SNRPG; catalyzes core snRNPs assembly. Forms a 6S pICln-Sm complex composed of CLNS1A/pICln, SNRPD1, SNRPD2, SNRPE, SNRPF and SNRPG; ring-like structure where CLNS1A/pICln mimics additional Sm proteins and which is unable to assemble into the core snRNP. Interacts with SMN1; the interaction is direct. Interacts with GEMIN2; the interaction is direct. Interacts with SNRPD1; the interaction is direct. Interacts with SNRPF; the interaction is direct.

It is found in the cytoplasm. The protein localises to the cytosol. It localises to the nucleus. Plays a role in pre-mRNA splicing as a core component of the spliceosomal U1, U2, U4 and U5 small nuclear ribonucleoproteins (snRNPs), the building blocks of the spliceosome. Component of both the pre-catalytic spliceosome B complex and activated spliceosome C complexes. As a component of the minor spliceosome, involved in the splicing of U12-type introns in pre-mRNAs. The chain is Small nuclear ribonucleoprotein Sm D2 (SNRPD2) from Homo sapiens (Human).